The primary structure comprises 274 residues: Protein YeeZ (274 aa).

A signal peptide spans 1-24 (MKKVAIVGLGWLGMPLAMSLSARG). 170–177 (GRFFAGKT) lines the ATP pocket.

This Escherichia coli O157:H7 protein is Protein YeeZ (yeeZ).